Consider the following 196-residue polypeptide: Peptidyl-tRNA hydrolase (196 aa).

Position 17 (Tyr-17) interacts with tRNA. His-22 (proton acceptor) is an active-site residue. Residues Phe-68, Asn-70, and Asn-116 each coordinate tRNA.

The protein belongs to the PTH family. In terms of assembly, monomer.

It is found in the cytoplasm. The catalysed reaction is an N-acyl-L-alpha-aminoacyl-tRNA + H2O = an N-acyl-L-amino acid + a tRNA + H(+). Its function is as follows. Hydrolyzes ribosome-free peptidyl-tRNAs (with 1 or more amino acids incorporated), which drop off the ribosome during protein synthesis, or as a result of ribosome stalling. In terms of biological role, catalyzes the release of premature peptidyl moieties from peptidyl-tRNA molecules trapped in stalled 50S ribosomal subunits, and thus maintains levels of free tRNAs and 50S ribosomes. In Photorhabdus laumondii subsp. laumondii (strain DSM 15139 / CIP 105565 / TT01) (Photorhabdus luminescens subsp. laumondii), this protein is Peptidyl-tRNA hydrolase.